A 535-amino-acid polypeptide reads, in one-letter code: BAR/IMD domain-containing adapter protein 2 (535 aa).

Residues 1–250 (MSLSRSEEMH…VQLMQQMANS (250 aa)) enclose the IMD domain. A coiled-coil region spans residues 88–153 (NQLEETLKSF…LRKKSQGSKN (66 aa)). Phosphoserine is present on residues S262, S324, S326, and S337. The interval 299–370 (VMNGVAGPDS…TLPRSSSMAA (72 aa)) is disordered. Residues 321–335 (QPKSLSPPQSQSKLS) show a composition bias toward low complexity. A Phosphothreonine modification is found at T341. A Phosphoserine modification is found at S347. Over residues 349-368 (TPKNSYATTENKTLPRSSSM) the composition is skewed to polar residues. The residue at position 361 (T361) is a Phosphothreonine. A phosphoserine mark is found at S367, S385, S396, and S455. Residues 375 to 438 (NGRMRVKAIF…PFSYTRVLDS (64 aa)) form the SH3 domain. Positions 445 to 477 (HMSLQQGKSSSTGNLLDKDDLALPPPDYGTSSR) are disordered. Residues 447–458 (SLQQGKSSSTGN) show a composition bias toward polar residues.

As to quaternary structure, homodimer. Interacts with CDC42 and RAC1 that have been activated by GTP binding. Binds DIAPH1. Interacts with ATN1, ADGRB1, SHANK1, SHANK2, SHANK3, TIAM1, WASF1 and WASF2. Interacts with ENAH after recruitment of CDC42. Interacts with EPS8. Post-translationally, phosphorylated on tyrosine residues by INSR in response to insulin treatment. Detected in liver, brain, olfactory bulb, brain cortex, caudate putamen, hypothalamus and cerebellum.

The protein localises to the cytoplasm. It localises to the membrane. Its subcellular location is the cell projection. It is found in the filopodium. The protein resides in the ruffle. The protein localises to the cytoskeleton. Adapter protein that links membrane-bound small G-proteins to cytoplasmic effector proteins. Necessary for CDC42-mediated reorganization of the actin cytoskeleton and for RAC1-mediated membrane ruffling. Involved in the regulation of the actin cytoskeleton by WASF family members and the Arp2/3 complex. Plays a role in neurite growth. Acts syngeristically with ENAH to promote filipodia formation. Plays a role in the reorganization of the actin cytoskeleton in response to bacterial infection. Participates in actin bundling when associated with EPS8, promoting filopodial protrusions. This Mus musculus (Mouse) protein is BAR/IMD domain-containing adapter protein 2 (Baiap2).